The chain runs to 430 residues: Asparagine--tRNA ligase (430 aa).

This sequence belongs to the class-II aminoacyl-tRNA synthetase family. In terms of assembly, homodimer.

The protein resides in the cytoplasm. It catalyses the reaction tRNA(Asn) + L-asparagine + ATP = L-asparaginyl-tRNA(Asn) + AMP + diphosphate + H(+). This is Asparagine--tRNA ligase from Geobacillus thermodenitrificans (strain NG80-2).